Reading from the N-terminus, the 163-residue chain is MPPKGHKKTADGDFRPVNSAGNTIQAKQKYSIDDLLYPKSTIKNLAKETLPDDAIISKDALTAIQRAATLFVSYMASHGNASAEAGGRKKITPQDVFVALKDVDLAQFVPSVTQSVNEFEQEVAQRKKDKVVRAQDDQDHISSSESETEATEEEGNKRIRTDE.

2 disordered regions span residues 1–22 (MPPKGHKKTADGDFRPVNSAGN) and 126–163 (RKKDKVVRAQDDQDHISSSESETEATEEEGNKRIRTDE). Composition is skewed to basic and acidic residues over residues 126–142 (RKKDKVVRAQDDQDHIS) and 154–163 (EGNKRIRTDE).

In terms of assembly, heterotetramer. Consists of four subunits: POL2, DPB2, DPB3 and DPB4.

It localises to the nucleus. As accessory component of the DNA polymerase epsilon (DNA polymerase II) participates in chromosomal DNA replication. The polypeptide is DNA polymerase epsilon subunit D (DPB4) (Yarrowia lipolytica (strain CLIB 122 / E 150) (Yeast)).